We begin with the raw amino-acid sequence, 247 residues long: uncharacterized protein (247 aa).

The N-terminal stretch at 1–35 (MWGPGVTAEGLSVAPAPPPLLPLLLLLALALVAPS) is a signal peptide. Residues 82–102 (LSGLLILLVLFAIGYFLQRII) form a helical membrane-spanning segment. Residues 109-176 (YPRGQARPGQ…RGSGGRLPPS (68 aa)) form a disordered region. Over residues 111–120 (RGQARPGQAR) the composition is skewed to low complexity. Positions 161–171 (SGGGRGRGSGG) are enriched in gly residues.

The protein resides in the membrane. This is an uncharacterized protein from Mus musculus (Mouse).